The chain runs to 160 residues: 6,7-dimethyl-8-ribityllumazine synthase (160 aa).

5-amino-6-(D-ribitylamino)uracil-binding positions include W28, 59-61 (SFE), and 82-84 (VII). 87 to 88 (GT) contacts (2S)-2-hydroxy-3-oxobutyl phosphate. Residue H90 is the Proton donor of the active site. 5-amino-6-(D-ribitylamino)uracil is bound at residue F115. R129 serves as a coordination point for (2S)-2-hydroxy-3-oxobutyl phosphate.

The protein belongs to the DMRL synthase family.

It catalyses the reaction (2S)-2-hydroxy-3-oxobutyl phosphate + 5-amino-6-(D-ribitylamino)uracil = 6,7-dimethyl-8-(1-D-ribityl)lumazine + phosphate + 2 H2O + H(+). The protein operates within cofactor biosynthesis; riboflavin biosynthesis; riboflavin from 2-hydroxy-3-oxobutyl phosphate and 5-amino-6-(D-ribitylamino)uracil: step 1/2. Its function is as follows. Catalyzes the formation of 6,7-dimethyl-8-ribityllumazine by condensation of 5-amino-6-(D-ribitylamino)uracil with 3,4-dihydroxy-2-butanone 4-phosphate. This is the penultimate step in the biosynthesis of riboflavin. This chain is 6,7-dimethyl-8-ribityllumazine synthase, found in Clavibacter michiganensis subsp. michiganensis (strain NCPPB 382).